We begin with the raw amino-acid sequence, 156 residues long: Arginine repressor (156 aa).

It belongs to the ArgR family.

The protein localises to the cytoplasm. The protein operates within amino-acid biosynthesis; L-arginine biosynthesis [regulation]. Its function is as follows. Regulates arginine biosynthesis genes. This is Arginine repressor from Pectobacterium atrosepticum (strain SCRI 1043 / ATCC BAA-672) (Erwinia carotovora subsp. atroseptica).